A 340-amino-acid chain; its full sequence is Phenylalanine--tRNA ligase alpha subunit (340 aa).

Residue E254 coordinates Mg(2+).

This sequence belongs to the class-II aminoacyl-tRNA synthetase family. Phe-tRNA synthetase alpha subunit type 1 subfamily. As to quaternary structure, tetramer of two alpha and two beta subunits. Mg(2+) is required as a cofactor.

Its subcellular location is the cytoplasm. It catalyses the reaction tRNA(Phe) + L-phenylalanine + ATP = L-phenylalanyl-tRNA(Phe) + AMP + diphosphate + H(+). The protein is Phenylalanine--tRNA ligase alpha subunit of Acidithiobacillus ferrooxidans (strain ATCC 23270 / DSM 14882 / CIP 104768 / NCIMB 8455) (Ferrobacillus ferrooxidans (strain ATCC 23270)).